Consider the following 156-residue polypeptide: MNIIEATVAAPDARVAIAIARFNNFINDSLLEGAIDALKRIGQVKDENITVVWVPGAYELPLAAQALAKTAKYDAVIALGTVIRGGTAHFEYVAGGASNGLAHVAQHSEIPVAFGVLTTESIEQAIERAGTKAGNKGAEAALTALEMINVLKAIQA.

5-amino-6-(D-ribitylamino)uracil is bound by residues Phe22, 57 to 59, and 81 to 83; these read AYE and TVI. 86–87 serves as a coordination point for (2S)-2-hydroxy-3-oxobutyl phosphate; it reads GT. His89 (proton donor) is an active-site residue. Phe114 lines the 5-amino-6-(D-ribitylamino)uracil pocket. Arg128 provides a ligand contact to (2S)-2-hydroxy-3-oxobutyl phosphate.

This sequence belongs to the DMRL synthase family. As to quaternary structure, forms an icosahedral capsid composed of 60 subunits, arranged as a dodecamer of pentamers.

The enzyme catalyses (2S)-2-hydroxy-3-oxobutyl phosphate + 5-amino-6-(D-ribitylamino)uracil = 6,7-dimethyl-8-(1-D-ribityl)lumazine + phosphate + 2 H2O + H(+). It functions in the pathway cofactor biosynthesis; riboflavin biosynthesis; riboflavin from 2-hydroxy-3-oxobutyl phosphate and 5-amino-6-(D-ribitylamino)uracil: step 1/2. In terms of biological role, catalyzes the formation of 6,7-dimethyl-8-ribityllumazine by condensation of 5-amino-6-(D-ribitylamino)uracil with 3,4-dihydroxy-2-butanone 4-phosphate. This is the penultimate step in the biosynthesis of riboflavin. The polypeptide is 6,7-dimethyl-8-ribityllumazine synthase (Cronobacter sakazakii (strain ATCC BAA-894) (Enterobacter sakazakii)).